Reading from the N-terminus, the 258-residue chain is Glucanase inhibitor protein 3 (258 aa).

The first 19 residues, 1 to 19 (MKIISAVAASSIALGAVSA), serve as a signal peptide directing secretion. The region spanning 29–256 (VLGGAVVPSG…ALEWINSITK (228 aa)) is the Peptidase S1 domain. Residues Cys56 and Cys72 are joined by a disulfide bond. N-linked (GlcNAc...) asparagine glycosylation is found at Asn90, Asn105, and Asn110. 2 cysteine pairs are disulfide-bonded: Cys180/Cys192 and Cys202/Cys233.

It belongs to the peptidase S1 family. Forms an apoplastic complex with host endoglucanases in tomato leaves during P.infestans infection.

The protein resides in the secreted. Secreted effector that suppresses host plant glucan elicitor-mediated defense responses. Targets host endoglucanases and inhibits the endoglucanase-mediated release of elicitor-active glucan oligosaccharides from P.infestans cell walls. The protein is Glucanase inhibitor protein 3 of Phytophthora infestans (Potato late blight agent).